The chain runs to 525 residues: Mitogen-activated protein kinase kinase 5 (525 aa).

The region spanning 59–317 (ETEGGFLGKG…CTELLRHPFI (259 aa)) is the Protein kinase domain. Residues 65 to 73 (LGKGSSGSV) and lysine 88 each bind ATP. The Proton acceptor role is filled by aspartate 178. Low complexity predominate over residues 358–367 (SALPLASEGG). Disordered stretches follow at residues 358-392 (SALP…ERHD) and 438-468 (SASV…AQHR).

This sequence belongs to the protein kinase superfamily. STE Ser/Thr protein kinase family. MAP kinase kinase subfamily. Requires Mg(2+) as cofactor.

It catalyses the reaction L-tyrosyl-[protein] + ATP = O-phospho-L-tyrosyl-[protein] + ADP + H(+). It carries out the reaction L-seryl-[protein] + ATP = O-phospho-L-seryl-[protein] + ADP + H(+). The catalysed reaction is L-threonyl-[protein] + ATP = O-phospho-L-threonyl-[protein] + ADP + H(+). Its function is as follows. Protein kinase which phosphorylates and activates MPK4 in vitro. The polypeptide is Mitogen-activated protein kinase kinase 5 (Leishmania mexicana).